Reading from the N-terminus, the 222-residue chain is MGQESFIYSFVARGTMILAEYTEFTGNFPSIAAQCLQKLPSSSNSKFTYNCDHHTFNFLVEDGYAYCVVAKDSLSKQISIAFLERVKADFKKRYGGGKASTAIAKSLNKEFGPVMKEHMNYIVDHAEEIEKLIKVKAQVSEVKSIMLENIDKAIDRGENLTVLTDKTENLRSQAQEYKKQGTQVRRKLWYQNMKIKLVVLGILLLLVLIIWISVCHGFNCTD.

The Cytoplasmic segment spans residues 1–197; sequence MGQESFIYSF…LWYQNMKIKL (197 aa). Positions 10–115 constitute a Longin domain; sequence FVARGTMILA…SLNKEFGPVM (106 aa). Residues 131-191 form the v-SNARE coiled-coil homology domain; that stretch reads KLIKVKAQVS…TQVRRKLWYQ (61 aa). Residues 198 to 218 traverse the membrane as a helical; Anchor for type IV membrane protein segment; sequence VVLGILLLLVLIIWISVCHGF. Over 219–222 the chain is Vesicular; that stretch reads NCTD.

This sequence belongs to the synaptobrevin family. In terms of tissue distribution, expressed in flowers, leaves, stems and roots.

The protein resides in the cell membrane. The protein localises to the early endosome membrane. Functionally, involved in the targeting and/or fusion of transport vesicles to their target membrane. This chain is Vesicle-associated membrane protein 724, found in Arabidopsis thaliana (Mouse-ear cress).